A 384-amino-acid polypeptide reads, in one-letter code: 8-amino-7-oxononanoate synthase (384 aa).

Arginine 21 lines the substrate pocket. Glycine 108–phenylalanine 109 serves as a coordination point for pyridoxal 5'-phosphate. Histidine 133 lines the substrate pocket. Pyridoxal 5'-phosphate contacts are provided by serine 179, histidine 207, and threonine 233. Lysine 236 carries the post-translational modification N6-(pyridoxal phosphate)lysine. Threonine 352 is a substrate binding site.

This sequence belongs to the class-II pyridoxal-phosphate-dependent aminotransferase family. BioF subfamily. In terms of assembly, homodimer. Pyridoxal 5'-phosphate is required as a cofactor.

It catalyses the reaction 6-carboxyhexanoyl-[ACP] + L-alanine + H(+) = (8S)-8-amino-7-oxononanoate + holo-[ACP] + CO2. It participates in cofactor biosynthesis; biotin biosynthesis. Catalyzes the decarboxylative condensation of pimeloyl-[acyl-carrier protein] and L-alanine to produce 8-amino-7-oxononanoate (AON), [acyl-carrier protein], and carbon dioxide. This chain is 8-amino-7-oxononanoate synthase, found in Escherichia coli (strain K12 / DH10B).